We begin with the raw amino-acid sequence, 216 residues long: MQKGILGKKLGMTQIFAPDGKIIPVTVVEAGPCVVVQKKTTATDGYNAVQLGFGEIRETLVNKPLKGHFEKHQVKATRYLREFRLDDVESLNVGDVIKADIFAEGELVDVTGISRGKGFAGGVKRWNFNRGPSSHGSKYHRRPGSLGQRRWARVPKGRKLPGRLGGERVTVLGLRVVKVDPEKNLILIKGAVPGAKGSLITIRDSVKAARAKAKAQ.

This sequence belongs to the universal ribosomal protein uL3 family. In terms of assembly, part of the 50S ribosomal subunit. Forms a cluster with proteins L14 and L19.

In terms of biological role, one of the primary rRNA binding proteins, it binds directly near the 3'-end of the 23S rRNA, where it nucleates assembly of the 50S subunit. The protein is Large ribosomal subunit protein uL3 of Symbiobacterium thermophilum (strain DSM 24528 / JCM 14929 / IAM 14863 / T).